The primary structure comprises 208 residues: Small ribosomal subunit protein uS4 (208 aa).

The segment at 24–52 (GVKPFDVKTKKANKAPGQHGQARGGKQSE) is disordered. The S4 RNA-binding domain maps to 98-160 (SRLDNVVYRM…AKQQLRIKNA (63 aa)).

Belongs to the universal ribosomal protein uS4 family. As to quaternary structure, part of the 30S ribosomal subunit. Contacts protein S5. The interaction surface between S4 and S5 is involved in control of translational fidelity.

In terms of biological role, one of the primary rRNA binding proteins, it binds directly to 16S rRNA where it nucleates assembly of the body of the 30S subunit. Its function is as follows. With S5 and S12 plays an important role in translational accuracy. The protein is Small ribosomal subunit protein uS4 of Acinetobacter baumannii (strain ACICU).